Here is a 147-residue protein sequence, read N- to C-terminus: Ribonuclease P protein component 2 (147 aa).

Belongs to the eukaryotic/archaeal RNase P protein component 2 family. In terms of assembly, consists of a catalytic RNA component and at least 4-5 protein subunits.

The protein localises to the cytoplasm. It carries out the reaction Endonucleolytic cleavage of RNA, removing 5'-extranucleotides from tRNA precursor.. Part of ribonuclease P, a protein complex that generates mature tRNA molecules by cleaving their 5'-ends. The sequence is that of Ribonuclease P protein component 2 from Methanocorpusculum labreanum (strain ATCC 43576 / DSM 4855 / Z).